The chain runs to 389 residues: MSFDLAARLAERQAADLFRQRPLLQTPQGPQVRADDQELLAFCSNDYLGLANHPEVIRALQLGAEKWGVGGGASHLVIGHSTPHHELEEALAEFTGRPRALLFSTGYMANLAVVTALLGQGDSVLQDRLNHASLLDAGLLCGARFSRYLHNDAVSLANRLRKASGNCLVVTDGVFSMDGDLADLPVLCAEARARDAWVMVDDAHGFGPLGATGGGIVEHFGLGLDEVQVLVGTLGKAFGTAGAFVAGSEELIETLIQFARPYIYTTSQPPAVACATLKSLELLRREGWRREHLQRLIARFRQGAAEIGLSLMDSPTPIQPILVGDSARALKLSALLKDRGLLVGAIRPPTVPAGSARLRVTLSAAHSEAQLELLLEALAECWPQVQADA.

A substrate-binding site is contributed by Arg19. 106 to 107 (GY) serves as a coordination point for pyridoxal 5'-phosphate. His131 is a binding site for substrate. Pyridoxal 5'-phosphate-binding residues include Ser176, His204, and Thr233. Lys236 is modified (N6-(pyridoxal phosphate)lysine). A substrate-binding site is contributed by Thr350.

The protein belongs to the class-II pyridoxal-phosphate-dependent aminotransferase family. BioF subfamily. Homodimer. Pyridoxal 5'-phosphate is required as a cofactor.

The enzyme catalyses 6-carboxyhexanoyl-[ACP] + L-alanine + H(+) = (8S)-8-amino-7-oxononanoate + holo-[ACP] + CO2. The protein operates within cofactor biosynthesis; biotin biosynthesis. In terms of biological role, catalyzes the decarboxylative condensation of pimeloyl-[acyl-carrier protein] and L-alanine to produce 8-amino-7-oxononanoate (AON), [acyl-carrier protein], and carbon dioxide. This chain is 8-amino-7-oxononanoate synthase, found in Ectopseudomonas mendocina (strain ymp) (Pseudomonas mendocina).